The sequence spans 842 residues: Elongation factor 2 (842 aa).

The tr-type G domain occupies 17-253 (SNVRNMSVIA…LWGENYFNPK (237 aa)). Residues 26-33 (AHVDHGKS), 104-108 (DSPGH), and 158-161 (NKVD) contribute to the GTP site. Ser-568 is subject to Phosphoserine. A Phosphothreonine modification is found at Thr-574. The residue at position 699 (His-699) is a Diphthamide.

Belongs to the TRAFAC class translation factor GTPase superfamily. Classic translation factor GTPase family. EF-G/EF-2 subfamily.

It localises to the cytoplasm. In terms of biological role, catalyzes the GTP-dependent ribosomal translocation step during translation elongation. During this step, the ribosome changes from the pre-translocational (PRE) to the post-translocational (POST) state as the newly formed A-site-bound peptidyl-tRNA and P-site-bound deacylated tRNA move to the P and E sites, respectively. Catalyzes the coordinated movement of the two tRNA molecules, the mRNA and conformational changes in the ribosome. This is Elongation factor 2 (eft201) from Schizosaccharomyces pombe (strain 972 / ATCC 24843) (Fission yeast).